We begin with the raw amino-acid sequence, 1154 residues long: Spike glycoprotein (1154 aa).

An N-terminal signal peptide occupies residues 1-18 (MLERSLLLATLLSALCSA). Residues 19-1096 (NLFGNNSYVY…LKTYIKWPWY (1078 aa)) lie on the Extracellular side of the membrane. Asn23, Asn74, Asn102, Asn139, Asn145, Asn164, Asn179, Asn213, Asn238, Asn248, Asn265, Asn272, Asn277, Asn307, Asn426, Asn448, Asn514, Asn531, Asn543, Asn580, Asn592, Asn670, and Asn677 each carry an N-linked (GlcNAc...) asparagine; by host glycan. The interval 770 to 875 (IPFATQLQAR…QVDRIITGRL (106 aa)) is heptad repeat 1 (HR1). Residues 823-867 (QDVVNKQSSILTETMASLNKNFGAISSVLQDIYQQLDSIQADAQV) adopt a coiled-coil conformation. N-linked (GlcNAc...) asparagine; by host glycosylation is found at Asn948, Asn961, Asn980, Asn1015, Asn1039, Asn1052, and Asn1075. Residues 1025 to 1106 (NDDFDFDDEL…VWLAIAFATI (82 aa)) form a heptad repeat 2 (HR2) region. A coiled-coil region spans residues 1056-1084 (PILDIGSEIDRIQGVIQGLNDSLIDLETL). The chain crosses the membrane as a helical span at residues 1097 to 1117 (VWLAIAFATIIFILILGWLFF). Topologically, residues 1118–1154 (MTGCCGCCCGCFGIIPLMSKCGKKSSYYTTFDNDVVT) are cytoplasmic.

The protein belongs to the gammacoronaviruses spike protein family. In terms of assembly, homotrimer; each monomer consists of a S1 and a S2 subunit. The resulting peplomers protrude from the virus surface as spikes. Post-translationally, specific enzymatic cleavages in vivo yield mature proteins. The precursor is processed into S1 and S2 by host cell furin or furin-like protease to yield the mature S1 and S2 proteins. The cleavage site between S1 and S2 requires the optimal sequence [KR]-X-[KR]-R. Additionally, a second cleavage leads to the release of a fusion peptide after viral attachment to host cell receptor.

Its subcellular location is the virion membrane. The protein resides in the host endoplasmic reticulum-Golgi intermediate compartment membrane. Attaches the virion to the host cell membrane by interacting with sialic acids, initiating the infection. Functionally, mediates fusion of the virion and cellular membranes by acting as a class I viral fusion protein. Under the current model, the protein has at least 3 conformational states: pre-fusion native state, pre-hairpin intermediate state, and post-fusion hairpin state. During viral and target cell membrane fusion, the coiled coil regions (heptad repeats) assume a trimer-of-hairpins structure, positioning the fusion peptide in close proximity to the C-terminal region of the ectodomain. The formation of this structure appears to drive apposition and subsequent fusion of viral and target cell membranes. In terms of biological role, acts as a viral fusion peptide after S2 cleavage occurring upon virus endocytosis. This Gallus gallus (Chicken) protein is Spike glycoprotein.